The primary structure comprises 282 residues: Phosphatidylglycerol--prolipoprotein diacylglyceryl transferase (282 aa).

The next 4 membrane-spanning stretches (helical) occupy residues 23–43 (IGPL…LLGW), 71–91 (FIVW…IFFY), 106–126 (IWNG…AMII), and 132–152 (GIPI…GLFF). R154 contacts a 1,2-diacyl-sn-glycero-3-phospho-(1'-sn-glycerol). The next 3 helical transmembrane spans lie at 189 to 209 (LYEA…LVYG), 217 to 237 (GFIT…VEFF), and 252 to 272 (WLTM…WAML).

The protein belongs to the Lgt family.

The protein localises to the cell inner membrane. The catalysed reaction is L-cysteinyl-[prolipoprotein] + a 1,2-diacyl-sn-glycero-3-phospho-(1'-sn-glycerol) = an S-1,2-diacyl-sn-glyceryl-L-cysteinyl-[prolipoprotein] + sn-glycerol 1-phosphate + H(+). The protein operates within protein modification; lipoprotein biosynthesis (diacylglyceryl transfer). Functionally, catalyzes the transfer of the diacylglyceryl group from phosphatidylglycerol to the sulfhydryl group of the N-terminal cysteine of a prolipoprotein, the first step in the formation of mature lipoproteins. In Rhizobium leguminosarum bv. trifolii (strain WSM2304), this protein is Phosphatidylglycerol--prolipoprotein diacylglyceryl transferase.